The primary structure comprises 431 residues: Adenylosuccinate synthetase (431 aa).

Residues 12–18 (GDEGKGK) and 40–42 (GHT) contribute to the GTP site. The active-site Proton acceptor is aspartate 13. Mg(2+) contacts are provided by aspartate 13 and glycine 40. Residues 13 to 16 (DEGK), 38 to 41 (NAGH), threonine 131, arginine 145, glutamine 225, threonine 240, and arginine 304 contribute to the IMP site. Catalysis depends on histidine 41, which acts as the Proton donor. 300-306 (VNTGRRR) provides a ligand contact to substrate. GTP contacts are provided by residues arginine 306, 332-334 (KLD), and 414-416 (STS).

It belongs to the adenylosuccinate synthetase family. As to quaternary structure, homodimer. Mg(2+) is required as a cofactor.

Its subcellular location is the cytoplasm. The catalysed reaction is IMP + L-aspartate + GTP = N(6)-(1,2-dicarboxyethyl)-AMP + GDP + phosphate + 2 H(+). The protein operates within purine metabolism; AMP biosynthesis via de novo pathway; AMP from IMP: step 1/2. Functionally, plays an important role in the de novo pathway of purine nucleotide biosynthesis. Catalyzes the first committed step in the biosynthesis of AMP from IMP. This is Adenylosuccinate synthetase from Beijerinckia indica subsp. indica (strain ATCC 9039 / DSM 1715 / NCIMB 8712).